The following is a 330-amino-acid chain: AP-1-like transcription factor YAP3 (330 aa).

The tract at residues 114-150 (SYSNTNYFSKNNGISPSSRSPSVAHNENVPDDSKAKK) is disordered. Over residues 121-138 (FSKNNGISPSSRSPSVAH) the composition is skewed to polar residues. Position 135 is a phosphoserine (S135). Residues 144–207 (DDSKAKKKAQ…TEINAENRLL (64 aa)) form the bZIP domain. The interval 147–168 (KAKKKAQNRAAQKAFRERKEAR) is basic motif. The tract at residues 172 to 207 (LQDKLLESERNRQSLLKEIEELRKANTEINAENRLL) is leucine-zipper.

This sequence belongs to the bZIP family. YAP subfamily. In terms of assembly, homodimer. Interacts with the C-terminal, cytoplasmic tail of the multidrug resistance ABC transporter PDR5.

It localises to the cytoplasm. It is found in the nucleus. Transcription activator involved in the regulation of genes expressed in response to environmental changes. When overexpressed it activates transcription of the multidrug resistance ABC transporter PDR5, thus conferring resistance to the fungicide fluconazole (FCZ) and cycloheximide. When overexpressed, it also confers, independent of PDR5, increased resistance to 4-nitroquinoline-N-oxide (4-NQO). Preferentially binds 5'-TTACTAA-3'. The sequence is that of AP-1-like transcription factor YAP3 (YAP3) from Saccharomyces cerevisiae (strain ATCC 204508 / S288c) (Baker's yeast).